The following is a 162-amino-acid chain: uncharacterized protein (162 aa).

The first 24 residues, 1-24 (MCKRFKFLLAVSALFISITVVLAG), serve as a signal peptide directing secretion. A lipid anchor (N-palmitoyl cysteine) is attached at Cys-25. Residue Cys-25 is the site of S-diacylglycerol cysteine attachment.

It is found in the cell membrane. This is an uncharacterized protein from Bacillus anthracis.